Reading from the N-terminus, the 360-residue chain is Serine/threonine transporter SstT (360 aa).

9 helical membrane-spanning segments follow: residues 17 to 37 (IGIG…ITVI), 40 to 60 (FGSL…LTLV), 78 to 98 (VICL…GASY), 138 to 158 (ALAT…GLAF), 179 to 199 (VVGW…FDTI), 212 to 232 (LLLL…NPLI), 295 to 315 (MAGA…TLGI), 316 to 336 (SVDF…AAGA), and 339 to 359 (VAGG…VPYV).

This sequence belongs to the dicarboxylate/amino acid:cation symporter (DAACS) (TC 2.A.23) family.

It localises to the cell membrane. The enzyme catalyses L-serine(in) + Na(+)(in) = L-serine(out) + Na(+)(out). It carries out the reaction L-threonine(in) + Na(+)(in) = L-threonine(out) + Na(+)(out). Functionally, involved in the import of serine and threonine into the cell, with the concomitant import of sodium (symport system). In Streptococcus suis (strain 05ZYH33), this protein is Serine/threonine transporter SstT.